A 208-amino-acid polypeptide reads, in one-letter code: Putative RING finger protein 413R (208 aa).

A disordered region spans residues 1-87; that stretch reads MDAIFYPLPI…RHWSDDDSDR (87 aa). Residues 22 to 71 are compositionally biased toward acidic residues; the sequence is DFQEEDFQEEDFQEEDFQEEDFQEEDEDEEDEEVNEYPSDLDDEYPDSDY. Residues 72-82 are compositionally biased toward basic and acidic residues; that stretch reads YDERSDRHWSD. The stretch at 83 to 147 forms a coiled coil; it reads DDSDRDLDDL…KLTTLSKNLT (65 aa). The RING-type zinc-finger motif lies at 148-196; that stretch reads CIICLTNQVQILTIPCGHLIMCNPCSLNLNNSVCTRGVNSNYEKCPKCR.

The sequence is that of Putative RING finger protein 413R (EF2) from Acheta domesticus (House cricket).